Reading from the N-terminus, the 98-residue chain is DNA-binding protein Fis (98 aa).

A DNA-binding region (H-T-H motif) is located at residues 74-93; sequence QTRAATMLGINRGTLRKKLK.

The protein belongs to the transcriptional regulatory Fis family. In terms of assembly, homodimer.

Activates ribosomal RNA transcription. Plays a direct role in upstream activation of rRNA promoters. This chain is DNA-binding protein Fis, found in Mannheimia haemolytica (Pasteurella haemolytica).